The primary structure comprises 87 residues: MASQTNKELFVGGLARILKEQRQVDVRLKAGDSDQKGVSISAHKLVLSARSEVFKMILETEEIKATTTLDTITLSELKHTELVALVE.

In terms of domain architecture, BTB spans 24 to 87 (VDVRLKAGDS…KHTELVALVE (64 aa)).

Its pathway is protein modification; protein ubiquitination. Functionally, may act as a substrate-specific adapter of an E3 ubiquitin-protein ligase complex (CUL3-RBX1-BTB) which mediates the ubiquitination and subsequent proteasomal degradation of target proteins. This is Putative BTB/POZ domain-containing protein At3g29740 from Arabidopsis thaliana (Mouse-ear cress).